The primary structure comprises 90 residues: Small ribosomal subunit protein uS15c (90 aa).

This sequence belongs to the universal ribosomal protein uS15 family. As to quaternary structure, part of the 30S ribosomal subunit.

It is found in the plastid. The protein localises to the chloroplast. In Hordeum vulgare (Barley), this protein is Small ribosomal subunit protein uS15c (rps15-A).